The primary structure comprises 150 residues: UPF0756 membrane protein PM0771 (150 aa).

Helical transmembrane passes span 12-34 (LVVLILLGVLSNNSSVTISAAIL), 52-72 (HGITLGIIILTIGVLSPIVSG), 79-99 (LAVFLNWKMWLAVAVGLLVAW), and 123-143 (ILGVAFVGGIPVGPLIAAGIL).

This sequence belongs to the UPF0756 family.

Its subcellular location is the cell membrane. This is UPF0756 membrane protein PM0771 from Pasteurella multocida (strain Pm70).